We begin with the raw amino-acid sequence, 61 residues long: MAKKALVNKAARKPKFAVRGYTRCNKCGRPRAVFRKFGLCRICLREMAHAGELPGVQKSSW.

Cys24, Cys27, Cys40, and Cys43 together coordinate Zn(2+).

It belongs to the universal ribosomal protein uS14 family. Zinc-binding uS14 subfamily. In terms of assembly, part of the 30S ribosomal subunit. Contacts proteins S3 and S10. Requires Zn(2+) as cofactor.

Binds 16S rRNA, required for the assembly of 30S particles and may also be responsible for determining the conformation of the 16S rRNA at the A site. This Mycobacterium avium (strain 104) protein is Small ribosomal subunit protein uS14.